Consider the following 297-residue polypeptide: Acetaldehyde dehydrogenase (297 aa).

15–18 (SGSI) contacts NAD(+). C130 serves as the catalytic Acyl-thioester intermediate. NAD(+) contacts are provided by residues 162 to 170 (SAGIATREN) and N272.

This sequence belongs to the acetaldehyde dehydrogenase family.

It carries out the reaction acetaldehyde + NAD(+) + CoA = acetyl-CoA + NADH + H(+). The sequence is that of Acetaldehyde dehydrogenase (mhpF) from Burkholderia pseudomallei (strain K96243).